A 401-amino-acid polypeptide reads, in one-letter code: Beta-ketoadipyl-CoA thiolase (401 aa).

Cysteine 90 acts as the Acyl-thioester intermediate in catalysis. Active-site proton acceptor residues include histidine 357 and cysteine 387.

The protein belongs to the thiolase-like superfamily. Thiolase family.

It carries out the reaction succinyl-CoA + acetyl-CoA = 3-oxoadipyl-CoA + CoA. It functions in the pathway aromatic compound metabolism; phenylacetate degradation. Catalyzes thiolytic cleavage of beta-ketoadipyl-CoA to succinyl-CoA and acetyl-CoA. The sequence is that of Beta-ketoadipyl-CoA thiolase (paaJ) from Escherichia coli.